The chain runs to 37 residues: Cytochrome b6-f complex subunit 5 (37 aa).

The chain crosses the membrane as a helical span at residues 5–25 (LLSGIVLGLVPVTIAGLFVTA).

The protein belongs to the PetG family. In terms of assembly, the 4 large subunits of the cytochrome b6-f complex are cytochrome b6, subunit IV (17 kDa polypeptide, PetD), cytochrome f and the Rieske protein, while the 4 small subunits are PetG, PetL, PetM and PetN. The complex functions as a dimer.

It is found in the plastid. The protein localises to the chloroplast thylakoid membrane. Its function is as follows. Component of the cytochrome b6-f complex, which mediates electron transfer between photosystem II (PSII) and photosystem I (PSI), cyclic electron flow around PSI, and state transitions. PetG is required for either the stability or assembly of the cytochrome b6-f complex. The protein is Cytochrome b6-f complex subunit 5 of Chlamydomonas moewusii (Chlamydomonas eugametos).